The primary structure comprises 141 residues: Cystatin (141 aa).

An N-terminal signal peptide occupies residues 1 to 26 (MVHSQLPVAGPLRLLCALLLLPSATM). In terms of domain architecture, Cystatin spans 29-129 (GGLSPRSVTD…CHFQVWSRPW (101 aa)). Residues 73–77 (QVVSG) carry the Secondary area of contact motif. Intrachain disulfides connect Cys91–Cys107 and Cys120–Cys140.

It belongs to the cystatin family. As to expression, expressed at a low level by the venom gland (at protein level).

It localises to the secreted. Inhibits various C1 cysteine proteases including cathepsin L, papain and cathepsin B. This protein has no toxic activity and its function in the venom is unknown. It may play a role as a housekeeping or regulatory protein. The polypeptide is Cystatin (Pseudechis australis (Mulga snake)).